Reading from the N-terminus, the 492-residue chain is Cytochrome P450 26A1 (492 aa).

A heme-binding site is contributed by Cys-437.

The protein belongs to the cytochrome P450 family. Requires heme as cofactor. In terms of tissue distribution, expressed primarily in ovary, brain and eyes.

The protein localises to the endoplasmic reticulum membrane. Its subcellular location is the microsome membrane. The catalysed reaction is all-trans-retinoate + reduced [NADPH--hemoprotein reductase] + O2 = all-trans-(4S)-hydroxyretinoate + oxidized [NADPH--hemoprotein reductase] + H2O + H(+). Functionally, a cytochrome P450 monooxygenase involved in the metabolism of all-trans retinoic acid (atRA), a signaling molecule that binds to retinoic acid receptors and regulates gene transcription. May regulate at-RA signaling during hindbrain development. Mechanistically, uses molecular oxygen inserting one oxygen atom into a substrate, and reducing the second into a water molecule, with two electrons provided by NADPH via cytochrome P450 reductase (CPR; NADPH-ferrihemoprotein reductase). Catalyzes the hydroxylation of carbon hydrogen bonds of atRA primarily at C-4. Has no activity toward 9-cis and 13-cis retinoic acid stereoisomers. May play a role in the oxidative metabolism of xenobiotics such as tazarotenic acid. The polypeptide is Cytochrome P450 26A1 (cyp26a1) (Xenopus laevis (African clawed frog)).